The chain runs to 377 residues: Prostaglandin E synthase 2 (377 aa).

Over 1-65 (MAAACTRTLG…LAAPVRGSGR (65 aa)) the chain is Lumenal. The helical transmembrane segment at 66-83 (VLGCAFLLGGGFGLYQTI) threads the bilayer. Residues 105–182 (LKLTLYQYKT…ALKTYISSKD (78 aa)) enclose the GST N-terminal domain. Glutathione is bound by residues Val153 and 166–167 (DS). The GST C-terminal domain occupies 266 to 377 (YIVREGKFGS…RMQKATQHVS (112 aa)).

It belongs to the GST superfamily. As to quaternary structure, homodimer.

The protein localises to the golgi apparatus membrane. It carries out the reaction prostaglandin H2 = prostaglandin E2. The catalysed reaction is prostaglandin H2 = (12S)-hydroxy-(5Z,8E,10E)-heptadecatrienoate + malonaldehyde. Its pathway is lipid metabolism; prostaglandin biosynthesis. With respect to regulation, isomerase activity is increased by sulfhydril compounds. Dithiothreitol (DTT) is most effective, followed by glutathione (GSH) and 2-mercaptoethanol. Isomerase that catalyzes the conversion of PGH2 into the more stable prostaglandin E2 (PGE2) (in vitro). The biological function and the GSH-dependent property of PTGES2 is still under debate. In vivo, PTGES2 could form a complex with GSH and heme and would not participate in PGE2 synthesis but would catalyze the degradation of prostaglandin E2 H2 (PGH2) to 12(S)-hydroxy-5(Z),8(E),10(E)-heptadecatrienoic acid (HHT) and malondialdehyde (MDA). The sequence is that of Prostaglandin E synthase 2 (ptges2) from Danio rerio (Zebrafish).